We begin with the raw amino-acid sequence, 314 residues long: Olfactory receptor 4Q2 (314 aa).

The Extracellular segment spans residues 1–26 (MDKNQTEVMREFFLSGFSQTPSIEAG). N-linked (GlcNAc...) asparagine glycosylation occurs at Asn-4. The helical transmembrane segment at 27–47 (LFVLFLFFYMSIWVGNVLIMV) threads the bilayer. At 48–61 (TVASDKYLNSSPMY) the chain is on the cytoplasmic side. The chain crosses the membrane as a helical span at residues 62-84 (FLLGNLSFLDLCYSTVTTPKLLA). The Extracellular segment spans residues 85-98 (DFFNHEKLISYDQC). Cys-98 and Cys-181 are joined by a disulfide. A helical membrane pass occupies residues 99–119 (IVQLFFLHFVGAAEMFLLTVM). Over 120–142 (AYDRYVAICRPLHYTTVMSRGLC) the chain is Cytoplasmic. A helical membrane pass occupies residues 143 to 163 (CVLVAASWMGGFVHSTVQTIL). Residues 164–196 (TVHLPFCGPNQVENTFFCDVPPVIKLACADTFV) lie on the Extracellular side of the membrane. The helical transmembrane segment at 197 to 217 (IELLMVSNSGLISTISFVVLI) threads the bilayer. At 218–236 (SSYTTILVKIRSKEGRRKA) the chain is on the cytoplasmic side. A helical transmembrane segment spans residues 237 to 257 (LSTCASHLMVVTLFFGPCIFI). The Extracellular portion of the chain corresponds to 258–268 (YARPFSTFSVD). Residues 269 to 289 (KMVSVLYNVITPMLNPLIYTL) traverse the membrane as a helical segment. The Cytoplasmic portion of the chain corresponds to 290-314 (RNKEVKSAMQKLWVRNGLTWKKQET).

This sequence belongs to the G-protein coupled receptor 1 family.

The protein localises to the cell membrane. Odorant receptor. In Homo sapiens (Human), this protein is Olfactory receptor 4Q2 (OR4Q2).